The sequence spans 48 residues: uncharacterized protein (48 aa).

This is an uncharacterized protein from Haemophilus influenzae (strain ATCC 51907 / DSM 11121 / KW20 / Rd).